The sequence spans 366 residues: RISC-loading complex subunit TARBP2 (366 aa).

Sufficient for interaction with PRKRA regions lie at residues 22–105 (MLAA…EPAL), 152–234 (SPQQ…DARD), and 287–366 (LGAL…AGSK). Residues 30–97 (TPISLLQEYG…AEVALKHLKG (68 aa)) enclose the DRBM 1 domain. Ser-152 is modified (phosphoserine). DRBM domains follow at residues 159 to 227 (NPVG…RVHT) and 293 to 361 (ACCR…YLKI). Residues 228–366 (VPLDARDGNE…QYLKIMAGSK (139 aa)) are sufficient for interaction with DICER1.

It belongs to the TARBP2 family. Self-associates. Component of the RISC loading complex (RLC), or micro-RNA (miRNA) loading complex (miRLC), which is composed of DICER1, AGO2 and TARBP2. Note that the trimeric RLC/miRLC is also referred to as RISC. Interacts with EIF2AK2/PKR and inhibits its protein kinase activity. Interacts with DHX9 and PRKRA. Interacts with DICER1, AGO2, MOV10, EIF6 and RPL7A (60S ribosome subunit); they form a large RNA-induced silencing complex (RISC). Interacts with IRF7; this interaction prevents IRF7 phosphorylation and activation. In terms of assembly, (Microbial infection) Interacts with FTSJ3; forms a complex with FTSJ3 and HIV-1 TAR RNA. As to quaternary structure, (Microbial infection) Interacts with ebolavirus VP30; this interaction, which occurs only in the presence of siRNA, prevents TARBP2 binding to DICER1 and thus allows the virus to counteract host RNA silencing. (Microbial infection) Interacts with ebolavirus VP35; this interaction prevents TARBP2 binding to DICER1 and thus allows the virus to counteract host RNA silencing.

The protein localises to the cytoplasm. It localises to the perinuclear region. The protein resides in the nucleus. Its function is as follows. Required for formation of the RNA induced silencing complex (RISC). Component of the RISC loading complex (RLC), also known as the micro-RNA (miRNA) loading complex (miRLC), which is composed of DICER1, AGO2 and TARBP2. Within the RLC/miRLC, DICER1 and TARBP2 are required to process precursor miRNAs (pre-miRNAs) to mature miRNAs and then load them onto AGO2. AGO2 bound to the mature miRNA constitutes the minimal RISC and may subsequently dissociate from DICER1 and TARBP2. May also play a role in the production of short interfering RNAs (siRNAs) from double-stranded RNA (dsRNA) by DICER1. Binds in vitro to the PRM1 3'-UTR. Seems to act as a repressor of translation. For some pre-miRNA substrates, may also alter the choice of cleavage site by DICER1. Negatively regulates IRF7-mediated IFN-beta signaling triggered by viral infection by inhibiting the phosphorylation of IRF7 and promoting its 'Lys'-48-linked ubiquitination and degradation. In terms of biological role, (Microbial infection) Binds to the HIV-1 TAR RNA which is located in the long terminal repeat (LTR) of HIV-1, and stimulates translation of TAR-containing RNAs. This is achieved in part at least by binding to and inhibiting EIF2AK2/PKR, thereby reducing phosphorylation and inhibition of EIF2S1/eIF-2-alpha. May also promote translation of TAR-containing RNAs independently of EIF2AK2/PKR. Mediates recruitment of FTSJ3 methyltransferase to HIV-1 RNA, leading to 2'-O-methylation of the viral genome, allowing HIV-1 to escape the innate immune system. In Homo sapiens (Human), this protein is RISC-loading complex subunit TARBP2.